Consider the following 298-residue polypeptide: Elongation factor Ts (298 aa).

An involved in Mg(2+) ion dislocation from EF-Tu region spans residues threonine 79–valine 82.

The protein belongs to the EF-Ts family.

The protein resides in the cytoplasm. Its function is as follows. Associates with the EF-Tu.GDP complex and induces the exchange of GDP to GTP. It remains bound to the aminoacyl-tRNA.EF-Tu.GTP complex up to the GTP hydrolysis stage on the ribosome. In Cereibacter sphaeroides (strain ATCC 17025 / ATH 2.4.3) (Rhodobacter sphaeroides), this protein is Elongation factor Ts.